Consider the following 750-residue polypeptide: (13E)-labda-7,13-dien-15-ol synthase (750 aa).

Residues Asp284, Asp286, Asp501, Asp505, Asn647, Thr651, and Glu655 each contribute to the Mg(2+) site. Residues 284-287 (DIDD) carry the DXDD motif motif. A DDXXD motif motif is present at residues 501–505 (DDLAD).

Belongs to the terpene synthase family. The cofactor is Mg(2+).

The enzyme catalyses geranylgeranyl diphosphate + H2O = (13E)-labda-7,13-dien-15-ol + diphosphate. It functions in the pathway secondary metabolite biosynthesis; terpenoid biosynthesis. Bifunctional diterpene synthase that directly generates the endocyclic double bond, as well as the hydroxyl group: produces an endocyclic double bond isomer of copalyl diphosphate (CPP), and carries out subsequent replacement of the diphosphate by a hydroxyl group to form (13E)-labda-7,13-dien-15-ol. In Selaginella moellendorffii (Spikemoss), this protein is (13E)-labda-7,13-dien-15-ol synthase.